Here is a 339-residue protein sequence, read N- to C-terminus: Tetraacyldisaccharide 4'-kinase (339 aa).

Residue 62–69 (VAGGTGKT) participates in ATP binding.

It belongs to the LpxK family.

The enzyme catalyses a lipid A disaccharide + ATP = a lipid IVA + ADP + H(+). The protein operates within glycolipid biosynthesis; lipid IV(A) biosynthesis; lipid IV(A) from (3R)-3-hydroxytetradecanoyl-[acyl-carrier-protein] and UDP-N-acetyl-alpha-D-glucosamine: step 6/6. Functionally, transfers the gamma-phosphate of ATP to the 4'-position of a tetraacyldisaccharide 1-phosphate intermediate (termed DS-1-P) to form tetraacyldisaccharide 1,4'-bis-phosphate (lipid IVA). The sequence is that of Tetraacyldisaccharide 4'-kinase from Xylella fastidiosa (strain 9a5c).